Reading from the N-terminus, the 310-residue chain is MGDNITSITEFLLLGFPVGPRIQMLLFGLFSLFYVFTLLGNGTILGLISLDSRLHAPMYFFLSHLAVVDIAYACNTVPRMLVNLLHPAKPISFAGRMMQTFLFSTFAVTECLLLVVMSYDLYVAICHPLRYLAIMTWRVCITLAVTSWTTGVLLSLIHLVLLLPLPFCRPQKIYHFFCEILAVLKLACADTHINENMVLAGAISGLVGPLSTIVVSYMCILCAILQIQSREVQRKAFCTCFSHLCVIGLFYGTAIIMYVGPRYGNPKEQKKYLLLFHSLFNPMLNPLICSLRNSEVKNTLKRVLGVERAL.

Over 1–24 (MGDNITSITEFLLLGFPVGPRIQM) the chain is Extracellular. N4 carries an N-linked (GlcNAc...) asparagine glycan. The chain crosses the membrane as a helical span at residues 25–48 (LLFGLFSLFYVFTLLGNGTILGLI). The Cytoplasmic segment spans residues 49–56 (SLDSRLHA). The chain crosses the membrane as a helical span at residues 57–78 (PMYFFLSHLAVVDIAYACNTVP). At 79–99 (RMLVNLLHPAKPISFAGRMMQ) the chain is on the extracellular side. The helical transmembrane segment at 100 to 119 (TFLFSTFAVTECLLLVVMSY) threads the bilayer. Topologically, residues 120-138 (DLYVAICHPLRYLAIMTWR) are cytoplasmic. A helical transmembrane segment spans residues 139–157 (VCITLAVTSWTTGVLLSLI). Residues 158-194 (HLVLLLPLPFCRPQKIYHFFCEILAVLKLACADTHIN) are Extracellular-facing. A helical transmembrane segment spans residues 195–218 (ENMVLAGAISGLVGPLSTIVVSYM). The Cytoplasmic segment spans residues 219 to 235 (CILCAILQIQSREVQRK). Residues 236-258 (AFCTCFSHLCVIGLFYGTAIIMY) form a helical membrane-spanning segment. Residues 259–271 (VGPRYGNPKEQKK) are Extracellular-facing. The helical transmembrane segment at 272-291 (YLLLFHSLFNPMLNPLICSL) threads the bilayer. Topologically, residues 292–310 (RNSEVKNTLKRVLGVERAL) are cytoplasmic.

The protein belongs to the G-protein coupled receptor 1 family.

It is found in the cell membrane. Odorant receptor. In Homo sapiens (Human), this protein is Olfactory receptor 2A7 (OR2A7).